A 441-amino-acid chain; its full sequence is 3-phosphoshikimate 1-carboxyvinyltransferase (441 aa).

Residues K25, S26, and R30 each coordinate 3-phosphoshikimate. Phosphoenolpyruvate is bound at residue K25. Phosphoenolpyruvate contacts are provided by G97 and R125. 3-phosphoshikimate-binding residues include S169, Q170, D311, and K338. Q170 contributes to the phosphoenolpyruvate binding site. D311 serves as the catalytic Proton acceptor. Phosphoenolpyruvate is bound by residues R342, R383, and K410.

This sequence belongs to the EPSP synthase family. In terms of assembly, monomer.

The protein resides in the cytoplasm. The catalysed reaction is 3-phosphoshikimate + phosphoenolpyruvate = 5-O-(1-carboxyvinyl)-3-phosphoshikimate + phosphate. The protein operates within metabolic intermediate biosynthesis; chorismate biosynthesis; chorismate from D-erythrose 4-phosphate and phosphoenolpyruvate: step 6/7. In terms of biological role, catalyzes the transfer of the enolpyruvyl moiety of phosphoenolpyruvate (PEP) to the 5-hydroxyl of shikimate-3-phosphate (S3P) to produce enolpyruvyl shikimate-3-phosphate and inorganic phosphate. The polypeptide is 3-phosphoshikimate 1-carboxyvinyltransferase (Chlamydia muridarum (strain MoPn / Nigg)).